A 179-amino-acid chain; its full sequence is Large ribosomal subunit protein uL5 (179 aa).

Belongs to the universal ribosomal protein uL5 family. In terms of assembly, part of the 50S ribosomal subunit; part of the 5S rRNA/L5/L18/L25 subcomplex. Contacts the 5S rRNA and the P site tRNA. Forms a bridge to the 30S subunit in the 70S ribosome.

Its function is as follows. This is one of the proteins that bind and probably mediate the attachment of the 5S RNA into the large ribosomal subunit, where it forms part of the central protuberance. In the 70S ribosome it contacts protein S13 of the 30S subunit (bridge B1b), connecting the 2 subunits; this bridge is implicated in subunit movement. Contacts the P site tRNA; the 5S rRNA and some of its associated proteins might help stabilize positioning of ribosome-bound tRNAs. This chain is Large ribosomal subunit protein uL5, found in Idiomarina loihiensis (strain ATCC BAA-735 / DSM 15497 / L2-TR).